The sequence spans 72 residues: Large ribosomal subunit protein uL29 (72 aa).

The protein belongs to the universal ribosomal protein uL29 family.

This chain is Large ribosomal subunit protein uL29, found in Prochlorococcus marinus (strain AS9601).